The chain runs to 118 residues: UPF0342 protein BT9727_0768 (118 aa).

Belongs to the UPF0342 family.

The chain is UPF0342 protein BT9727_0768 from Bacillus thuringiensis subsp. konkukian (strain 97-27).